The primary structure comprises 121 residues: Large ribosomal subunit protein uL14c (121 aa).

This sequence belongs to the universal ribosomal protein uL14 family. In terms of assembly, part of the 50S ribosomal subunit.

The protein resides in the plastid. Its subcellular location is the chloroplast. Binds to 23S rRNA. The protein is Large ribosomal subunit protein uL14c of Euglena gracilis.